The sequence spans 380 residues: tRNA-specific 2-thiouridylase MnmA (380 aa).

Residues 26–33 (AMSGGVDS) and leucine 52 each bind ATP. The active-site Nucleophile is the cysteine 120. The cysteines at positions 120 and 217 are disulfide-linked. Glycine 144 contacts ATP. The interaction with tRNA stretch occupies residues 166–168 (RDQ). Cysteine 217 (cysteine persulfide intermediate) is an active-site residue.

Belongs to the MnmA/TRMU family.

The protein resides in the cytoplasm. It carries out the reaction S-sulfanyl-L-cysteinyl-[protein] + uridine(34) in tRNA + AH2 + ATP = 2-thiouridine(34) in tRNA + L-cysteinyl-[protein] + A + AMP + diphosphate + H(+). Catalyzes the 2-thiolation of uridine at the wobble position (U34) of tRNA, leading to the formation of s(2)U34. This chain is tRNA-specific 2-thiouridylase MnmA, found in Jannaschia sp. (strain CCS1).